Reading from the N-terminus, the 130-residue chain is Small ribosomal subunit protein uS9 (130 aa).

This sequence belongs to the universal ribosomal protein uS9 family.

This Hydrogenovibrio crunogenus (strain DSM 25203 / XCL-2) (Thiomicrospira crunogena) protein is Small ribosomal subunit protein uS9.